Here is a 596-residue protein sequence, read N- to C-terminus: Phosphomethylpyrimidine synthase 1 (596 aa).

Substrate is bound by residues asparagine 228, methionine 257, tyrosine 286, histidine 322, 342–344 (SRG), 383–386 (DGLR), and glutamate 422. Histidine 426 contributes to the Zn(2+) binding site. Tyrosine 449 is a binding site for substrate. Position 490 (histidine 490) interacts with Zn(2+). Residues cysteine 570, cysteine 573, and cysteine 578 each coordinate [4Fe-4S] cluster.

Belongs to the ThiC family. Homodimer. Requires [4Fe-4S] cluster as cofactor.

The enzyme catalyses 5-amino-1-(5-phospho-beta-D-ribosyl)imidazole + S-adenosyl-L-methionine = 4-amino-2-methyl-5-(phosphooxymethyl)pyrimidine + CO + 5'-deoxyadenosine + formate + L-methionine + 3 H(+). Its pathway is cofactor biosynthesis; thiamine diphosphate biosynthesis. Functionally, catalyzes the synthesis of the hydroxymethylpyrimidine phosphate (HMP-P) moiety of thiamine from aminoimidazole ribotide (AIR) in a radical S-adenosyl-L-methionine (SAM)-dependent reaction. In Syntrophotalea carbinolica (strain DSM 2380 / NBRC 103641 / GraBd1) (Pelobacter carbinolicus), this protein is Phosphomethylpyrimidine synthase 1.